Reading from the N-terminus, the 238-residue chain is ATP synthase subunit a (238 aa).

5 helical membrane-spanning segments follow: residues 17–37 (LSDMLMITITCLIVFIIAVAA), 75–95 (FLTLGVTLIMYVFVANMLGLP), 112–132 (DATVTLTLAVMVVALTHYYGV), 179–199 (ILLGLLASLGTHYGVLGAVGA), and 202–222 (FPIMVWQAFSIFVGTIQAFIF).

Belongs to the ATPase A chain family. In terms of assembly, F-type ATPases have 2 components, CF(1) - the catalytic core - and CF(0) - the membrane proton channel. CF(1) has five subunits: alpha(3), beta(3), gamma(1), delta(1), epsilon(1). CF(0) has three main subunits: a(1), b(2) and c(9-12). The alpha and beta chains form an alternating ring which encloses part of the gamma chain. CF(1) is attached to CF(0) by a central stalk formed by the gamma and epsilon chains, while a peripheral stalk is formed by the delta and b chains.

The protein localises to the cell membrane. In terms of biological role, key component of the proton channel; it plays a direct role in the translocation of protons across the membrane. This Bacillus sp. (strain PS3) protein is ATP synthase subunit a.